The chain runs to 1053 residues: Mgp-operon protein 3 (1053 aa).

The first 25 residues, M1–A25, serve as a signal peptide directing secretion. Disordered stretches follow at residues S162–L207 and E224–S261. Basic and acidic residues predominate over residues A164–H175. Positions G179 to L207 are enriched in polar residues. A helical transmembrane segment spans residues V946–P966. Residues A1024 to S1053 form a disordered region. A compositionally biased stretch (basic and acidic residues) spans P1037–S1053.

The protein localises to the cell membrane. In Mycoplasma genitalium (strain ATCC 33530 / DSM 19775 / NCTC 10195 / G37) (Mycoplasmoides genitalium), this protein is Mgp-operon protein 3.